A 47-amino-acid polypeptide reads, in one-letter code: MAKGKRTFQPNNRRRARVHGFRLRMRTRAGRAIVTGRRRKGRRALTA.

This sequence belongs to the bacterial ribosomal protein bL34 family.

In Mycobacterium ulcerans (strain Agy99), this protein is Large ribosomal subunit protein bL34.